A 297-amino-acid chain; its full sequence is Phosphatidylserine decarboxylase proenzyme (297 aa).

Active-site charge relay system; for autoendoproteolytic cleavage activity residues include aspartate 100, histidine 157, and serine 263. Serine 263 serves as the catalytic Schiff-base intermediate with substrate; via pyruvic acid; for decarboxylase activity. A Pyruvic acid (Ser); by autocatalysis modification is found at serine 263.

This sequence belongs to the phosphatidylserine decarboxylase family. PSD-B subfamily. Prokaryotic type I sub-subfamily. As to quaternary structure, heterodimer of a large membrane-associated beta subunit and a small pyruvoyl-containing alpha subunit. Pyruvate is required as a cofactor. Post-translationally, is synthesized initially as an inactive proenzyme. Formation of the active enzyme involves a self-maturation process in which the active site pyruvoyl group is generated from an internal serine residue via an autocatalytic post-translational modification. Two non-identical subunits are generated from the proenzyme in this reaction, and the pyruvate is formed at the N-terminus of the alpha chain, which is derived from the carboxyl end of the proenzyme. The autoendoproteolytic cleavage occurs by a canonical serine protease mechanism, in which the side chain hydroxyl group of the serine supplies its oxygen atom to form the C-terminus of the beta chain, while the remainder of the serine residue undergoes an oxidative deamination to produce ammonia and the pyruvoyl prosthetic group on the alpha chain. During this reaction, the Ser that is part of the protease active site of the proenzyme becomes the pyruvoyl prosthetic group, which constitutes an essential element of the active site of the mature decarboxylase.

The protein resides in the cell membrane. The enzyme catalyses a 1,2-diacyl-sn-glycero-3-phospho-L-serine + H(+) = a 1,2-diacyl-sn-glycero-3-phosphoethanolamine + CO2. It functions in the pathway phospholipid metabolism; phosphatidylethanolamine biosynthesis; phosphatidylethanolamine from CDP-diacylglycerol: step 2/2. In terms of biological role, catalyzes the formation of phosphatidylethanolamine (PtdEtn) from phosphatidylserine (PtdSer). The polypeptide is Phosphatidylserine decarboxylase proenzyme (Glaesserella parasuis serovar 5 (strain SH0165) (Haemophilus parasuis)).